Reading from the N-terminus, the 253-residue chain is uncharacterized protein (253 aa).

Belongs to the MG439/MG440 family.

This is an uncharacterized protein from Mycoplasma pneumoniae (strain ATCC 29342 / M129 / Subtype 1) (Mycoplasmoides pneumoniae).